Here is a 250-residue protein sequence, read N- to C-terminus: Triosephosphate isomerase, cytosolic (250 aa).

Residues N1 and K3 each coordinate substrate. The active-site Electrophile is the H87. The active-site Proton acceptor is E160.

Belongs to the triosephosphate isomerase family. Homodimer.

Its subcellular location is the cytoplasm. The catalysed reaction is D-glyceraldehyde 3-phosphate = dihydroxyacetone phosphate. It functions in the pathway carbohydrate biosynthesis; gluconeogenesis. Its pathway is carbohydrate degradation; glycolysis; D-glyceraldehyde 3-phosphate from glycerone phosphate: step 1/1. This is Triosephosphate isomerase, cytosolic (TPI1) from Gracilaria gracilis (Red alga).